The sequence spans 178 residues: Ribosome maturation factor RimM (178 aa).

The 74-residue stretch at 100 to 173 folds into the PRC barrel domain; the sequence is ADEYFIHQLY…QIVVRLLPGL (74 aa).

It belongs to the RimM family. In terms of assembly, binds ribosomal protein uS19.

The protein resides in the cytoplasm. In terms of biological role, an accessory protein needed during the final step in the assembly of 30S ribosomal subunit, possibly for assembly of the head region. Essential for efficient processing of 16S rRNA. May be needed both before and after RbfA during the maturation of 16S rRNA. It has affinity for free ribosomal 30S subunits but not for 70S ribosomes. The protein is Ribosome maturation factor RimM of Roseiflexus castenholzii (strain DSM 13941 / HLO8).